Consider the following 430-residue polypeptide: Trigger factor (430 aa).

Residues 157–242 (GDLVALETWS…AVEVSEPVLP (86 aa)) form the PPIase FKBP-type domain.

It belongs to the FKBP-type PPIase family. Tig subfamily.

The protein localises to the cytoplasm. The enzyme catalyses [protein]-peptidylproline (omega=180) = [protein]-peptidylproline (omega=0). In terms of biological role, involved in protein export. Acts as a chaperone by maintaining the newly synthesized protein in an open conformation. Functions as a peptidyl-prolyl cis-trans isomerase. This Xanthomonas oryzae pv. oryzae (strain PXO99A) protein is Trigger factor.